The following is a 264-amino-acid chain: Indolethylamine N-methyltransferase (264 aa).

Lys-14 is modified (N6-succinyllysine). S-adenosyl-L-methionine is bound by residues Tyr-21, Tyr-26, 64-65 (GS), Tyr-70, Asp-86, and Asn-91. Lys-97 carries the post-translational modification N6-succinyllysine. S-adenosyl-L-methionine is bound by residues 143–144 (DV) and Phe-164.

Belongs to the class I-like SAM-binding methyltransferase superfamily. NNMT/PNMT/TEMT family. As to quaternary structure, monomer. In terms of tissue distribution, detected in lung and liver (at protein level).

Its subcellular location is the cytoplasm. The catalysed reaction is a tertiary amine + S-adenosyl-L-methionine = a methylated tertiary amine + S-adenosyl-L-homocysteine + H(+). The enzyme catalyses a secondary amine + S-adenosyl-L-methionine = a methylated secondary amine + S-adenosyl-L-homocysteine + H(+). It carries out the reaction a primary amine + S-adenosyl-L-methionine = a methylated primary amine + S-adenosyl-L-homocysteine + H(+). It catalyses the reaction dimethyl sulfide + S-adenosyl-L-methionine = trimethylsulfonium + S-adenosyl-L-homocysteine. Inhibited by the S-adenosyl-L-methionine analog sinefungin and by the product S-adenosyl-L-homocysteine. Functionally, catalyzes the N-methylation of tryptamine and structurally related compounds. Functions as a thioether S-methyltransferase and is active with a variety of thioethers and the corresponding selenium and tellurium compounds, including 3-methylthiopropionaldehyde, dimethyl selenide, dimethyl telluride, 2-methylthioethylamine, 2-methylthioethanol, methyl-n-propyl sulfide and diethyl sulfide. Plays an important role in the detoxification of selenium compounds. This is Indolethylamine N-methyltransferase (Inmt) from Mus musculus (Mouse).